The chain runs to 217 residues: ATP-dependent Clp protease proteolytic subunit 3 (217 aa).

Residues 1 to 13 show a composition bias toward low complexity; sequence MSPFTAGPAPART. Residues 1 to 23 are disordered; sequence MSPFTAGPAPARTPRAEEGDTPA. Serine 108 (nucleophile) is an active-site residue. Residue histidine 133 is part of the active site.

It belongs to the peptidase S14 family. Fourteen ClpP subunits assemble into 2 heptameric rings which stack back to back to give a disk-like structure with a central cavity, resembling the structure of eukaryotic proteasomes.

The protein resides in the cytoplasm. It catalyses the reaction Hydrolysis of proteins to small peptides in the presence of ATP and magnesium. alpha-casein is the usual test substrate. In the absence of ATP, only oligopeptides shorter than five residues are hydrolyzed (such as succinyl-Leu-Tyr-|-NHMec, and Leu-Tyr-Leu-|-Tyr-Trp, in which cleavage of the -Tyr-|-Leu- and -Tyr-|-Trp bonds also occurs).. Functionally, cleaves peptides in various proteins in a process that requires ATP hydrolysis. Has a chymotrypsin-like activity. Plays a major role in the degradation of misfolded proteins. This is ATP-dependent Clp protease proteolytic subunit 3 from Streptomyces coelicolor (strain ATCC BAA-471 / A3(2) / M145).